A 183-amino-acid polypeptide reads, in one-letter code: UPF0397 protein PBPRA2239 (183 aa).

5 helical membrane-spanning segments follow: residues 8-28 (VVLIAIGAALYGIGGLPMFGI), 41-61 (AVLALFSVLFGPLVGFLVGFI), 69-89 (FAGWGVWLTWVLGSGLVGLII), 110-130 (FALFVFLAFLGNVIGYGCSAY), and 147-167 (LIIIAAGNTLLIAIVGHYILT).

The protein belongs to the UPF0397 family.

The protein localises to the cell membrane. This chain is UPF0397 protein PBPRA2239, found in Photobacterium profundum (strain SS9).